Here is a 730-residue protein sequence, read N- to C-terminus: Elongation factor 2 (730 aa).

A tr-type G domain is found at 19 to 260; that stretch reads EKIRNIGIVA…MVIRFLPNPL (242 aa). GTP contacts are provided by residues 28-35, 94-98, and 148-151; these read AHIDHGKT, DTPGH, and NKVD. Residue His596 is modified to Diphthamide.

The protein belongs to the TRAFAC class translation factor GTPase superfamily. Classic translation factor GTPase family. EF-G/EF-2 subfamily.

Its subcellular location is the cytoplasm. Catalyzes the GTP-dependent ribosomal translocation step during translation elongation. During this step, the ribosome changes from the pre-translocational (PRE) to the post-translocational (POST) state as the newly formed A-site-bound peptidyl-tRNA and P-site-bound deacylated tRNA move to the P and E sites, respectively. Catalyzes the coordinated movement of the two tRNA molecules, the mRNA and conformational changes in the ribosome. This chain is Elongation factor 2 (fusA), found in Methanosarcina thermophila.